Consider the following 313-residue polypeptide: Homoserine O-succinyltransferase (313 aa).

Cys-142 (acyl-thioester intermediate) is an active-site residue. Lys-163 and Ser-192 together coordinate substrate. His-235 acts as the Proton acceptor in catalysis. Glu-237 is a catalytic residue. Arg-249 is a binding site for substrate.

Belongs to the MetA family.

The protein localises to the cytoplasm. The enzyme catalyses L-homoserine + succinyl-CoA = O-succinyl-L-homoserine + CoA. The protein operates within amino-acid biosynthesis; L-methionine biosynthesis via de novo pathway; O-succinyl-L-homoserine from L-homoserine: step 1/1. Functionally, transfers a succinyl group from succinyl-CoA to L-homoserine, forming succinyl-L-homoserine. This chain is Homoserine O-succinyltransferase, found in Vibrio vulnificus (strain YJ016).